Here is a 389-residue protein sequence, read N- to C-terminus: MKKLLKSALLFAATGSALSLQALPVGNPAEPSLLIDGTMWEGASGDPCDPCSTWCDAISIRAGYYGDYVFDRVLKVDVNKTITGMGAVPTGTAAANYKTPTDRPNIAYGKHLQDAEWFTNAAFLALNIWDRFDIFCTLGASNGYFKASSAAFNLVGLIGVKGSSIAADQLPNVGITQGIVEFYTDTTFSWSVGARGALWECGCATLGAEFQYAQSNPKIEMLNVVSSPAQFVVHKPRGYKGTAFPLPLTAGTDQATDTKSATIKYHEWQVGLALSYRLNMLVPYISVNWSRATFDADAIRIAQPKLAAAVLNLTTWNPTLLGEATALDTSNKFADFLQIASIQINKMKSRKACGVAVGATLIDADKWSITGEARLINERAAHMNAQFRF.

Positions 1–22 (MKKLLKSALLFAATGSALSLQA) are cleaved as a signal peptide.

The protein belongs to the chlamydial porin (CP) (TC 1.B.2) family. As to quaternary structure, part of a disulfide cross-linked outer membrane complex (COMC) composed of the major outer membrane porin (MOMP), the small cysteine-rich protein (OmcA) and the large cysteine-rich periplasmic protein (OmcB).

The protein resides in the cell outer membrane. In elementary bodies (EBs, the infectious stage, which is able to survive outside the host cell) provides the structural integrity of the outer envelope through disulfide cross-links with the small cysteine-rich protein and the large cysteine-rich periplasmic protein. It has been described in publications as the Sarkosyl-insoluble COMC (Chlamydia outer membrane complex), and serves as the functional equivalent of peptidoglycan. In terms of biological role, permits diffusion of specific solutes through the outer membrane. This is Major outer membrane porin (ompA) from Chlamydia abortus (strain DSM 27085 / S26/3) (Chlamydophila abortus).